A 377-amino-acid chain; its full sequence is DNA primase small subunit PriS (377 aa).

Active-site residues include aspartate 99, aspartate 101, and aspartate 274.

It belongs to the eukaryotic-type primase small subunit family. In terms of assembly, heterodimer of a small subunit (PriS) and a large subunit (PriL). Requires Mg(2+) as cofactor. Mn(2+) is required as a cofactor.

Its function is as follows. Catalytic subunit of DNA primase, an RNA polymerase that catalyzes the synthesis of short RNA molecules used as primers for DNA polymerase during DNA replication. The small subunit contains the primase catalytic core and has DNA synthesis activity on its own. Binding to the large subunit stabilizes and modulates the activity, increasing the rate of DNA synthesis while decreasing the length of the DNA fragments, and conferring RNA synthesis capability. The DNA polymerase activity may enable DNA primase to also catalyze primer extension after primer synthesis. May also play a role in DNA repair. In Staphylothermus marinus (strain ATCC 43588 / DSM 3639 / JCM 9404 / F1), this protein is DNA primase small subunit PriS.